A 341-amino-acid polypeptide reads, in one-letter code: BBSome complex member BBS5 (341 aa).

Belongs to the BBS5 family. As to quaternary structure, part of BBSome complex, that contains BBS1, BBS2, BBS4, BBS5, BBS7, BBS8/TTC8, BBS9 and BBIP10. Binds to phosphoinositides. Interacts with CCDC28B. Interacts with SMO; the interaction is indicative for the association of SMO with the BBsome complex to facilitate ciliary localization of SMO. Interacts with PKD1. Interacts with DLEC1.

The protein resides in the cell projection. The protein localises to the cilium membrane. It localises to the cytoplasm. It is found in the cytoskeleton. Its subcellular location is the cilium basal body. The protein resides in the microtubule organizing center. The protein localises to the centrosome. It localises to the centriolar satellite. Its function is as follows. The BBSome complex is thought to function as a coat complex required for sorting of specific membrane proteins to the primary cilia. The BBSome complex is required for ciliogenesis but is dispensable for centriolar satellite function. This ciliogenic function is mediated in part by the Rab8 GDP/GTP exchange factor, which localizes to the basal body and contacts the BBSome. Rab8(GTP) enters the primary cilium and promotes extension of the ciliary membrane. Firstly the BBSome associates with the ciliary membrane and binds to RAB3IP/Rabin8, the guanosyl exchange factor (GEF) for Rab8 and then the Rab8-GTP localizes to the cilium and promotes docking and fusion of carrier vesicles to the base of the ciliary membrane. The BBSome complex, together with the LTZL1, controls SMO ciliary trafficking and contributes to the sonic hedgehog (SHH) pathway regulation. Required for BBSome complex ciliary localization but not for the proper complex assembly. In Homo sapiens (Human), this protein is BBSome complex member BBS5 (BBS5).